The chain runs to 1128 residues: Apoptosis-stimulating of p53 protein 2 (1128 aa).

Positions 85–120 are disordered; that stretch reads PPNRDIVSGPRSQDPSVKRNGVKVPGEHRRKENGVN. Positions 332 to 348 are interaction with APPBP1; it reads NLPQQAVSAPSRVAAVG. A disordered region spans residues 393-436; sequence MRSGAASQSKGSKAHPASPDWNPSNADLLPSQGSSVPQSAGTAL. The span at 413-433 shows a compositional bias: polar residues; the sequence is WNPSNADLLPSQGSSVPQSAG. Phosphoserine occurs at positions 479, 555, 568, 571, and 575. 2 disordered regions span residues 549–596 and 654–705; these read QARM…FPPA and NPQQ…LPFL. Over residues 562–574 the composition is skewed to polar residues; sequence GQDQVLSPASKQE. Residues 654–669 are compositionally biased toward polar residues; the sequence is NPQQHPENIYSCSQGK. Residues 684–693 show a composition bias toward basic and acidic residues; that stretch reads HESHENERIP. 3 positions are modified to phosphoserine: S697, S713, and S736. Disordered stretches follow at residues 723-748, 802-824, and 870-907; these read KLSNAPRPLKKRSSITEPEGPNGPNI, SLVPEPLSPEDMGSASTENSDVP, and PPPPYPSGEPEVSEEDSARMRPPEITGQVSLPPGKRTN. The SH3-binding signature appears at 866-875; it reads YPPYPPPPYP. A mediates interaction with APC2 region spans residues 876-1128; that stretch reads SGEPEVSEED…RIKPRQRSLA (253 aa). ANK repeat units lie at residues 958–987 and 991–1020; these read EGITALHNAVCAGHTEIVKFLVQFGVNVNA and DGWTPLHCAASCNNVQVCKFLVESGAAVFA. One can recognise an SH3 domain in the interval 1057–1119; that stretch reads MNKGVIYALW…PRNLLGLYPR (63 aa).

This sequence belongs to the ASPP family. As to quaternary structure, interacts with P53/TP53; the interaction promotes pro-apoptotic activity. Interacts with BCL2. Interacts with protein phosphatase 1. Interacts with RELA NF-kappa-B subunit. This interaction probably prevents the activation of apoptosis, possibly by preventing its interaction with p53/TP53. Interacts with APC2 and APPBP1. Interacts with DDX42 (via the C-terminus); the interaction is not inhibited by TP53BP2 ubiquitination and is independent of p53/TP53.

It is found in the cytoplasm. Its subcellular location is the perinuclear region. It localises to the nucleus. In terms of biological role, regulator that plays a central role in regulation of apoptosis and cell growth via its interactions with proteins such as TP53. Regulates p53/TP53 by enhancing the DNA binding and transactivation function of p53/TP53 on the promoters of proapoptotic genes in vivo. Inhibits the ability of APPBP1 to conjugate NEDD8 to CUL1, and thereby decreases APPBP1 ability to induce apoptosis. Impedes cell cycle progression at G2/M. Its apoptosis-stimulating activity is inhibited by its interaction with DDX42. The chain is Apoptosis-stimulating of p53 protein 2 (Tp53bp2) from Mus musculus (Mouse).